The following is a 102-amino-acid chain: Large ribosomal subunit protein bL21 (102 aa).

Belongs to the bacterial ribosomal protein bL21 family. In terms of assembly, part of the 50S ribosomal subunit. Contacts protein L20.

In terms of biological role, this protein binds to 23S rRNA in the presence of protein L20. The protein is Large ribosomal subunit protein bL21 of Nitratidesulfovibrio vulgaris (strain ATCC 29579 / DSM 644 / CCUG 34227 / NCIMB 8303 / VKM B-1760 / Hildenborough) (Desulfovibrio vulgaris).